The primary structure comprises 143 residues: Holo-[acyl-carrier-protein] synthase (143 aa).

D9 and E63 together coordinate Mg(2+).

Belongs to the P-Pant transferase superfamily. AcpS family. Requires Mg(2+) as cofactor.

It localises to the cytoplasm. It carries out the reaction apo-[ACP] + CoA = holo-[ACP] + adenosine 3',5'-bisphosphate + H(+). Its function is as follows. Transfers the 4'-phosphopantetheine moiety from coenzyme A to a Ser of acyl-carrier-protein. This Burkholderia pseudomallei (strain 668) protein is Holo-[acyl-carrier-protein] synthase.